The sequence spans 374 residues: Dihydrolipoyllysine-residue acetyltransferase component of acetoin cleaving system (374 aa).

In terms of domain architecture, Lipoyl-binding spans Ile9–Ala84. Residue Lys50 is modified to N6-lipoyllysine. One can recognise an AB hydrolase-1 domain in the interval Thr137–Lys360.

Requires (R)-lipoate as cofactor.

The catalysed reaction is N(6)-[(R)-dihydrolipoyl]-L-lysyl-[protein] + acetyl-CoA = N(6)-[(R)-S(8)-acetyldihydrolipoyl]-L-lysyl-[protein] + CoA. Its pathway is ketone degradation; acetoin degradation. Dihydrolipoamide acetyltransferase involved in acetoin catabolism. This chain is Dihydrolipoyllysine-residue acetyltransferase component of acetoin cleaving system (acoC), found in Cupriavidus necator (strain ATCC 17699 / DSM 428 / KCTC 22496 / NCIMB 10442 / H16 / Stanier 337) (Ralstonia eutropha).